The sequence spans 225 residues: MESLGINNIYNALDRIKLNAKMNILVRDPYHYDNNGNIVGVDDSYLKNAYKQILNWSSDGVSLNLDEDVNQALSGYMLQIKKPSNHLTNSPVTITLAGKDSGVGELYRVLSDGTGFLDFNKFDENWRSLVDPGDDVYVYAVTKEDFNAVTRDENGNIANKLKNTLVLSGKIKEINIKTTNINIFVVFMFIIYLLFYIISSTVFAKSCNCILIYVEVSQLMNSVFY.

The helical transmembrane segment at 181–203 (INIFVVFMFIIYLLFYIISSTVF) threads the bilayer.

It is found in the cell membrane. This is an uncharacterized protein from Bacillus anthracis.